A 58-amino-acid chain; its full sequence is Conotoxin Im5.4 (58 aa).

A signal peptide spans 1 to 18 (MRCLPVVVFLLLLLSAAA). A propeptide spanning residues 19–28 (APGVGSKTER) is cleaved from the precursor.

The protein belongs to the conotoxin T superfamily. Post-translationally, contains 2 disulfide bonds that can be either 'C1-C3, C2-C4' or 'C1-C4, C2-C3', since these disulfide connectivities have been observed for conotoxins with cysteine framework V (for examples, see AC P0DQQ7 and AC P81755). As to expression, expressed by the venom duct.

Its subcellular location is the secreted. Probable neurotoxin. The chain is Conotoxin Im5.4 from Conus imperialis (Imperial cone).